A 308-amino-acid polypeptide reads, in one-letter code: Methionyl-tRNA formyltransferase (308 aa).

109-112 (SLLP) contacts (6S)-5,6,7,8-tetrahydrofolate.

It belongs to the Fmt family.

It catalyses the reaction L-methionyl-tRNA(fMet) + (6R)-10-formyltetrahydrofolate = N-formyl-L-methionyl-tRNA(fMet) + (6S)-5,6,7,8-tetrahydrofolate + H(+). In terms of biological role, attaches a formyl group to the free amino group of methionyl-tRNA(fMet). The formyl group appears to play a dual role in the initiator identity of N-formylmethionyl-tRNA by promoting its recognition by IF2 and preventing the misappropriation of this tRNA by the elongation apparatus. The chain is Methionyl-tRNA formyltransferase from Caulobacter vibrioides (strain NA1000 / CB15N) (Caulobacter crescentus).